Here is a 274-residue protein sequence, read N- to C-terminus: ATP synthase subunit a (274 aa).

5 helical membrane passes run valine 44–valine 64, phenylalanine 110–isoleucine 130, isoleucine 142–phenylalanine 164, leucine 212–tryptophan 232, and alanine 243–valine 263.

This sequence belongs to the ATPase A chain family. F-type ATPases have 2 components, CF(1) - the catalytic core - and CF(0) - the membrane proton channel. CF(1) has five subunits: alpha(3), beta(3), gamma(1), delta(1), epsilon(1). CF(0) has three main subunits: a(1), b(2) and c(9-12). The alpha and beta chains form an alternating ring which encloses part of the gamma chain. CF(1) is attached to CF(0) by a central stalk formed by the gamma and epsilon chains, while a peripheral stalk is formed by the delta and b chains.

The protein localises to the cell membrane. Its function is as follows. Key component of the proton channel; it plays a direct role in the translocation of protons across the membrane. The chain is ATP synthase subunit a from Buchnera aphidicola subsp. Acyrthosiphon pisum (strain APS) (Acyrthosiphon pisum symbiotic bacterium).